We begin with the raw amino-acid sequence, 504 residues long: Pentatricopeptide repeat-containing protein At1g09220, mitochondrial (504 aa).

The N-terminal 87 residues, 1–87, are a transit peptide targeting the mitochondrion; sequence MFLFSSRRIT…FLFNPLLRCY (87 aa). 10 PPR repeats span residues 76-110, 120-156, 157-187, 188-222, 223-253, 255-289, 291-321, 324-358, 359-390, and 396-430; these read KLFL…HFLS, DSFT…GFES, HVYV…MPER, NPVT…TVVS, WTTI…DAIK, NEIT…GFVP, DIRV…IPNG, NLVS…GLKP, NRVT…MVNE, and DVKH…EKAV. The type E motif; degenerate stretch occupies residues 431 to 504; that stretch reads VWRMLLGACS…AKLPGHSQVT (74 aa).

It belongs to the PPR family. PCMP-E subfamily.

The protein resides in the mitochondrion. This is Pentatricopeptide repeat-containing protein At1g09220, mitochondrial (PCMP-E25) from Arabidopsis thaliana (Mouse-ear cress).